The following is a 2138-amino-acid chain: DNA polymerase epsilon catalytic subunit B (2138 aa).

Positions 1224-1231 match the Nuclear localization signal 1 motif; it reads EKRKWKMT. Residues Cys-2015, Cys-2018, Cys-2040, and Cys-2045 each contribute to the Zn(2+) site. The segment at 2015 to 2045 adopts a CysA-type zinc-finger fold; sequence CSNCGAYRDLDFCRDSALLTEKEWSCADPQC. [4Fe-4S] cluster contacts are provided by Cys-2076, Cys-2079, Cys-2091, and Cys-2093. Residues 2076-2093 carry the CysB motif motif; that stretch reads CNRCNQVKAAHLTEQCEC. The short motif at 2107–2114 is the Nuclear localization signal 2 element; sequence HKRIEIFL.

It belongs to the DNA polymerase type-B family. In terms of assembly, heterotetramer. [4Fe-4S] cluster is required as a cofactor. Mostly expressed at low levels in inflorescence (floral meristem and flowers until anthesis), and, to a lower extent, in seeds.

It localises to the nucleus. The enzyme catalyses DNA(n) + a 2'-deoxyribonucleoside 5'-triphosphate = DNA(n+1) + diphosphate. Functionally, DNA polymerase II, which participates in chromosomal DNA replication. Involved in the determination of cell fate during plant embryogenesis. Contributes to the flowering time repression. The chain is DNA polymerase epsilon catalytic subunit B (POL2B) from Arabidopsis thaliana (Mouse-ear cress).